The sequence spans 249 residues: 5'-nucleotidase SurE (249 aa).

A divalent metal cation contacts are provided by Asp8, Asp9, Ser39, and Asn91.

It belongs to the SurE nucleotidase family. A divalent metal cation is required as a cofactor.

It localises to the cytoplasm. The enzyme catalyses a ribonucleoside 5'-phosphate + H2O = a ribonucleoside + phosphate. Its function is as follows. Nucleotidase that shows phosphatase activity on nucleoside 5'-monophosphates. The sequence is that of 5'-nucleotidase SurE from Azotobacter vinelandii (strain DJ / ATCC BAA-1303).